Reading from the N-terminus, the 185-residue chain is Ribosome hibernation promotion factor (185 aa).

The probably still associates with ribosome stretch occupies residues 1–125 (MIKFNIRGEN…PLDTTDEVAE (125 aa)). The segment at 126-185 (DHVDIVRTKHVALKPMDAEEAVLQMDMLGHDFYVFTDADSNGTHVVYRRTDGRYGLIETE) is required but not sufficient to restore ribosome dimerization, in vitro will replace E.coli RMF in ribosome dimerization.

The protein belongs to the HPF/YfiA ribosome-associated protein family. Long HPF subfamily. As to quaternary structure, interacts with 100S ribosomes in stationary phase; alters the relative position of the 30S and 50S subunits.

It localises to the cytoplasm. Required for dimerization of active 70S ribosomes into 100S ribosomes in stationary phase; 100S ribosomes are translationally inactive and sometimes present during exponential growth. Able to dimerize E.coli 70S ribosomes in vitro. This Lactococcus lactis subsp. cremoris (strain MG1363) protein is Ribosome hibernation promotion factor.